Reading from the N-terminus, the 112-residue chain is Putative pterin-4-alpha-carbinolamine dehydratase (112 aa).

It belongs to the pterin-4-alpha-carbinolamine dehydratase family.

It carries out the reaction (4aS,6R)-4a-hydroxy-L-erythro-5,6,7,8-tetrahydrobiopterin = (6R)-L-erythro-6,7-dihydrobiopterin + H2O. This chain is Putative pterin-4-alpha-carbinolamine dehydratase, found in Shewanella pealeana (strain ATCC 700345 / ANG-SQ1).